Here is a 338-residue protein sequence, read N- to C-terminus: Glyceraldehyde-3-phosphate dehydrogenase 2 (338 aa).

Residues 13-14 (TI) and G111 each bind NAD(+). 140-142 (SCN) is a D-glyceraldehyde 3-phosphate binding site. The active-site Nucleophile is C141. R169 is an NAD(+) binding site. Position 195-196 (195-196 (HG)) interacts with D-glyceraldehyde 3-phosphate. An NAD(+)-binding site is contributed by Q300.

Belongs to the glyceraldehyde-3-phosphate dehydrogenase family. Homotetramer.

It is found in the cytoplasm. It carries out the reaction D-glyceraldehyde 3-phosphate + phosphate + NADP(+) = (2R)-3-phospho-glyceroyl phosphate + NADPH + H(+). The catalysed reaction is D-glyceraldehyde 3-phosphate + phosphate + NAD(+) = (2R)-3-phospho-glyceroyl phosphate + NADH + H(+). It participates in carbohydrate degradation; glycolysis; pyruvate from D-glyceraldehyde 3-phosphate: step 1/5. This chain is Glyceraldehyde-3-phosphate dehydrogenase 2, found in Methanosarcina barkeri (strain Fusaro / DSM 804).